Here is a 178-residue protein sequence, read N- to C-terminus: ATP-dependent protease subunit HslV (178 aa).

Threonine 7 is a catalytic residue. The Na(+) site is built by glycine 162, cysteine 165, and threonine 168.

The protein belongs to the peptidase T1B family. HslV subfamily. In terms of assembly, a double ring-shaped homohexamer of HslV is capped on each side by a ring-shaped HslU homohexamer. The assembly of the HslU/HslV complex is dependent on binding of ATP.

The protein localises to the cytoplasm. The catalysed reaction is ATP-dependent cleavage of peptide bonds with broad specificity.. Allosterically activated by HslU binding. Functionally, protease subunit of a proteasome-like degradation complex believed to be a general protein degrading machinery. In Herminiimonas arsenicoxydans, this protein is ATP-dependent protease subunit HslV.